The primary structure comprises 253 residues: Imidazole glycerol phosphate synthase subunit HisF (253 aa).

Residues Asp-13 and Asp-132 contribute to the active site.

Belongs to the HisA/HisF family. Heterodimer of HisH and HisF.

The protein localises to the cytoplasm. It carries out the reaction 5-[(5-phospho-1-deoxy-D-ribulos-1-ylimino)methylamino]-1-(5-phospho-beta-D-ribosyl)imidazole-4-carboxamide + L-glutamine = D-erythro-1-(imidazol-4-yl)glycerol 3-phosphate + 5-amino-1-(5-phospho-beta-D-ribosyl)imidazole-4-carboxamide + L-glutamate + H(+). It participates in amino-acid biosynthesis; L-histidine biosynthesis; L-histidine from 5-phospho-alpha-D-ribose 1-diphosphate: step 5/9. Its function is as follows. IGPS catalyzes the conversion of PRFAR and glutamine to IGP, AICAR and glutamate. The HisF subunit catalyzes the cyclization activity that produces IGP and AICAR from PRFAR using the ammonia provided by the HisH subunit. In Aliarcobacter butzleri (strain RM4018) (Arcobacter butzleri), this protein is Imidazole glycerol phosphate synthase subunit HisF.